A 545-amino-acid chain; its full sequence is Chaperonin GroEL (545 aa).

Residues 30–33 (TLGP), Lys51, 87–91 (DGTTT), Gly415, 479–481 (NAA), and Asp495 each bind ATP. Residues 526-545 (KEDKPDLGNAGAGGNMGGMM) are disordered. Residues 535-545 (AGAGGNMGGMM) are compositionally biased toward gly residues.

The protein belongs to the chaperonin (HSP60) family. In terms of assembly, forms a cylinder of 14 subunits composed of two heptameric rings stacked back-to-back. Interacts with the co-chaperonin GroES.

The protein localises to the cytoplasm. It carries out the reaction ATP + H2O + a folded polypeptide = ADP + phosphate + an unfolded polypeptide.. Functionally, together with its co-chaperonin GroES, plays an essential role in assisting protein folding. The GroEL-GroES system forms a nano-cage that allows encapsulation of the non-native substrate proteins and provides a physical environment optimized to promote and accelerate protein folding. This is Chaperonin GroEL from Blochmanniella pennsylvanica (strain BPEN).